A 461-amino-acid chain; its full sequence is Tumor necrosis factor receptor superfamily member 1A (461 aa).

An N-terminal signal peptide occupies residues 1 to 29; that stretch reads MGLSTVPGLLLPLVLRALLVDVYPAGVHG. Over 30-210 the chain is Extracellular; it reads LVLHPGDREK…RNDFQDTGTT (181 aa). 4 TNFR-Cys repeats span residues 43–82, 83–125, 126–166, and 167–195; these read LCPQ…TDCR, ECDN…DTVC, GCRK…DTIC, and NCHS…NLCP. 7 cysteine pairs are disulfide-bonded: cysteine 44–cysteine 58, cysteine 59–cysteine 72, cysteine 62–cysteine 81, cysteine 84–cysteine 99, cysteine 102–cysteine 117, cysteine 105–cysteine 125, and cysteine 127–cysteine 143. The N-linked (GlcNAc...) asparagine glycan is linked to asparagine 54. A glycan (N-linked (GlcNAc...) asparagine) is linked at asparagine 86. Asparagine 145 and asparagine 151 each carry an N-linked (GlcNAc...) asparagine glycan. 5 disulfides stabilise this stretch: cysteine 146/cysteine 158, cysteine 149/cysteine 166, cysteine 168/cysteine 179, cysteine 182/cysteine 194, and cysteine 185/cysteine 190. A helical transmembrane segment spans residues 211 to 233; sequence VLLPLVIFFGLCLAFFLFVGLAC. Residues 234–461 are Cytoplasmic-facing; that stretch reads RYQRWKPKLY…RLAPAPHLLR (228 aa). Residues 340–350 form an N-SMase activation domain (NSD) region; that stretch reads LPKWGGSAHSA. The 86-residue stretch at 362–447 folds into the Death domain; sequence PATLYAVVDG…GCLEDIEEAL (86 aa).

Binding of TNF to the extracellular domain leads to homotrimerization. The aggregated death domains provide a novel molecular interface that interacts specifically with the death domain of TRADD. Various TRADD-interacting proteins such as TRAFS, RIPK1 and possibly FADD, are recruited to the complex by their association with TRADD. This complex activates at least two distinct signaling cascades, apoptosis and NF-kappa-B signaling. Interacts with BAG4, BABAM2, FEM1B, GRB2, SQSTM1 and TRPC4AP. Interacts with DAB2IP. Interacts directly with NOL3 (via CARD domain); inhibits TNF-signaling pathway. Interacts with SH3RF2, TRADD and RIPK1. SH3RF2 facilitates the recruitment of RIPK1 and TRADD to TNFRSF1A in a TNF-alpha-dependent process. Interacts with PGLYRP1; this interaction is important for cell death induction. Interacts (via death domain) with MADD (via death domain).

It localises to the cell membrane. The protein localises to the golgi apparatus membrane. Its function is as follows. Receptor for TNFSF2/TNF-alpha and homotrimeric TNFSF1/lymphotoxin-alpha. The adapter molecule FADD recruits caspase-8 to the activated receptor. The resulting death-inducing signaling complex (DISC) performs caspase-8 proteolytic activation which initiates the subsequent cascade of caspases (aspartate-specific cysteine proteases) mediating apoptosis. The polypeptide is Tumor necrosis factor receptor superfamily member 1A (TNFRSF1A) (Sus scrofa (Pig)).